The sequence spans 137 residues: MLVIILGVIGLLASSNLVSSSTSTRVGGHLPLTFDPPENELGYWCTYVESCRFCWDCEDGVCTSRIWGNNSTSIVENSYIKYCEVSRWGDQCRYDVEEHIYYTMNCSDPKPWNPYKIARKEWKKNEHFRKDLKKDEF.

The signal sequence occupies residues 1 to 20; the sequence is MLVIILGVIGLLASSNLVSS. Residues Asn-69, Asn-70, and Asn-105 are each glycosylated (N-linked (GlcNAc...) asparagine; by host).

This sequence belongs to the asfivirus MGF 110 family.

In terms of biological role, plays a role in virus cell tropism, and may be required for efficient virus replication in macrophages. The chain is Protein MGF 110-7L from African swine fever virus (isolate Pig/Kenya/KEN-50/1950) (ASFV).